The primary structure comprises 364 residues: tRNA 2-selenouridine synthase (364 aa).

Residues 14–137 (LLADTPLIDV…LRQTAIQATW (124 aa)) enclose the Rhodanese domain. Catalysis depends on cysteine 97, which acts as the S-selanylcysteine intermediate.

Belongs to the SelU family. In terms of assembly, monomer.

It carries out the reaction 5-methylaminomethyl-2-thiouridine(34) in tRNA + selenophosphate + (2E)-geranyl diphosphate + H2O + H(+) = 5-methylaminomethyl-2-selenouridine(34) in tRNA + (2E)-thiogeraniol + phosphate + diphosphate. The catalysed reaction is 5-methylaminomethyl-2-thiouridine(34) in tRNA + (2E)-geranyl diphosphate = 5-methylaminomethyl-S-(2E)-geranyl-thiouridine(34) in tRNA + diphosphate. The enzyme catalyses 5-methylaminomethyl-S-(2E)-geranyl-thiouridine(34) in tRNA + selenophosphate + H(+) = 5-methylaminomethyl-2-(Se-phospho)selenouridine(34) in tRNA + (2E)-thiogeraniol. It catalyses the reaction 5-methylaminomethyl-2-(Se-phospho)selenouridine(34) in tRNA + H2O = 5-methylaminomethyl-2-selenouridine(34) in tRNA + phosphate. In terms of biological role, involved in the post-transcriptional modification of the uridine at the wobble position (U34) of tRNA(Lys), tRNA(Glu) and tRNA(Gln). Catalyzes the conversion of 2-thiouridine (S2U-RNA) to 2-selenouridine (Se2U-RNA). Acts in a two-step process involving geranylation of 2-thiouridine (S2U) to S-geranyl-2-thiouridine (geS2U) and subsequent selenation of the latter derivative to 2-selenouridine (Se2U) in the tRNA chain. In Salmonella dublin (strain CT_02021853), this protein is tRNA 2-selenouridine synthase.